Consider the following 257-residue polypeptide: Ubiquinone biosynthesis O-methyltransferase (257 aa).

S-adenosyl-L-methionine is bound by residues Arg-43, Gly-77, Asp-98, and Met-144.

This sequence belongs to the methyltransferase superfamily. UbiG/COQ3 family.

It catalyses the reaction a 3-demethylubiquinol + S-adenosyl-L-methionine = a ubiquinol + S-adenosyl-L-homocysteine + H(+). The catalysed reaction is a 3-(all-trans-polyprenyl)benzene-1,2-diol + S-adenosyl-L-methionine = a 2-methoxy-6-(all-trans-polyprenyl)phenol + S-adenosyl-L-homocysteine + H(+). It functions in the pathway cofactor biosynthesis; ubiquinone biosynthesis. Functionally, O-methyltransferase that catalyzes the 2 O-methylation steps in the ubiquinone biosynthetic pathway. The protein is Ubiquinone biosynthesis O-methyltransferase of Psychrobacter arcticus (strain DSM 17307 / VKM B-2377 / 273-4).